Consider the following 386-residue polypeptide: Methylthioribose-1-phosphate isomerase (386 aa).

D258 functions as the Proton donor in the catalytic mechanism.

The protein belongs to the eIF-2B alpha/beta/delta subunits family. MtnA subfamily.

The protein localises to the cytoplasm. The protein resides in the nucleus. It carries out the reaction 5-(methylsulfanyl)-alpha-D-ribose 1-phosphate = 5-(methylsulfanyl)-D-ribulose 1-phosphate. It participates in amino-acid biosynthesis; L-methionine biosynthesis via salvage pathway; L-methionine from S-methyl-5-thio-alpha-D-ribose 1-phosphate: step 1/6. In terms of biological role, catalyzes the interconversion of methylthioribose-1-phosphate (MTR-1-P) into methylthioribulose-1-phosphate (MTRu-1-P). This chain is Methylthioribose-1-phosphate isomerase, found in Postia placenta (strain ATCC 44394 / Madison 698-R) (Brown rot fungus).